The sequence spans 254 residues: Imidazole glycerol phosphate synthase subunit HisF (254 aa).

Residues D12 and D131 contribute to the active site.

This sequence belongs to the HisA/HisF family. As to quaternary structure, heterodimer of HisH and HisF.

The protein localises to the cytoplasm. It catalyses the reaction 5-[(5-phospho-1-deoxy-D-ribulos-1-ylimino)methylamino]-1-(5-phospho-beta-D-ribosyl)imidazole-4-carboxamide + L-glutamine = D-erythro-1-(imidazol-4-yl)glycerol 3-phosphate + 5-amino-1-(5-phospho-beta-D-ribosyl)imidazole-4-carboxamide + L-glutamate + H(+). The protein operates within amino-acid biosynthesis; L-histidine biosynthesis; L-histidine from 5-phospho-alpha-D-ribose 1-diphosphate: step 5/9. IGPS catalyzes the conversion of PRFAR and glutamine to IGP, AICAR and glutamate. The HisF subunit catalyzes the cyclization activity that produces IGP and AICAR from PRFAR using the ammonia provided by the HisH subunit. This Desulfitobacterium hafniense (strain Y51) protein is Imidazole glycerol phosphate synthase subunit HisF.